The following is a 61-amino-acid chain: Small ribosomal subunit protein uS14 (61 aa).

Positions 24, 27, 40, and 43 each coordinate Zn(2+).

The protein belongs to the universal ribosomal protein uS14 family. Zinc-binding uS14 subfamily. In terms of assembly, part of the 30S ribosomal subunit. Contacts proteins S3 and S10. Zn(2+) is required as a cofactor.

Binds 16S rRNA, required for the assembly of 30S particles and may also be responsible for determining the conformation of the 16S rRNA at the A site. This Helicobacter pylori (strain G27) protein is Small ribosomal subunit protein uS14.